We begin with the raw amino-acid sequence, 316 residues long: Bifunctional protein FolD (316 aa).

NADP(+)-binding positions include 165–167 (GKS) and I231.

It belongs to the tetrahydrofolate dehydrogenase/cyclohydrolase family. Homodimer.

It catalyses the reaction (6R)-5,10-methylene-5,6,7,8-tetrahydrofolate + NADP(+) = (6R)-5,10-methenyltetrahydrofolate + NADPH. The enzyme catalyses (6R)-5,10-methenyltetrahydrofolate + H2O = (6R)-10-formyltetrahydrofolate + H(+). The protein operates within one-carbon metabolism; tetrahydrofolate interconversion. Its function is as follows. Catalyzes the oxidation of 5,10-methylenetetrahydrofolate to 5,10-methenyltetrahydrofolate and then the hydrolysis of 5,10-methenyltetrahydrofolate to 10-formyltetrahydrofolate. In Sphingobium chlorophenolicum, this protein is Bifunctional protein FolD.